The following is a 392-amino-acid chain: 2-oxoisovalerate dehydrogenase subunit beta, mitochondrial (392 aa).

A mitochondrion-targeting transit peptide spans 1 to 50; sequence MAAVAAFAGWLLRLRAAGADGPWRRLCGAGLSRGFLQSASAYGAAAQRRQ. Tyr-152 contacts thiamine diphosphate. 5 residues coordinate K(+): Gly-178, Leu-180, Thr-181, Cys-228, and Asp-231. An N6-acetyllysine modification is found at Lys-232. Residue Asn-233 participates in K(+) binding. Lys-241 is modified (N6-acetyllysine).

Heterotetramer of 2 alpha/BCKDHA and 2 beta chains/BCKDHB that forms the branched-chain alpha-keto acid decarboxylase (E1) component of the BCKD complex. The branched-chain alpha-ketoacid dehydrogenase is a large complex composed of three major building blocks E1, E2 and E3. It is organized around E2, a 24-meric cubic core composed of DBT, to which are associated 6 to 12 copies of E1, and approximately 6 copies of the dehydrogenase E3, a DLD dimer. The cofactor is thiamine diphosphate.

Its subcellular location is the mitochondrion matrix. The catalysed reaction is N(6)-[(R)-lipoyl]-L-lysyl-[protein] + 3-methyl-2-oxobutanoate + H(+) = N(6)-[(R)-S(8)-2-methylpropanoyldihydrolipoyl]-L-lysyl-[protein] + CO2. Together with BCKDHA forms the heterotetrameric E1 subunit of the mitochondrial branched-chain alpha-ketoacid dehydrogenase (BCKD) complex. The BCKD complex catalyzes the multi-step oxidative decarboxylation of alpha-ketoacids derived from the branched-chain amino-acids valine, leucine and isoleucine producing CO2 and acyl-CoA which is subsequently utilized to produce energy. The E1 subunit catalyzes the first step with the decarboxylation of the alpha-ketoacid forming an enzyme-product intermediate. A reductive acylation mediated by the lipoylamide cofactor of E2 extracts the acyl group from the E1 active site for the next step of the reaction. This is 2-oxoisovalerate dehydrogenase subunit beta, mitochondrial (BCKDHB) from Bos taurus (Bovine).